We begin with the raw amino-acid sequence, 201 residues long: uncharacterized protein (201 aa).

This is an uncharacterized protein from Lepidoptera (butterflies and moths).